We begin with the raw amino-acid sequence, 37 residues long: Large ribosomal subunit protein bL36 (37 aa).

This sequence belongs to the bacterial ribosomal protein bL36 family.

This chain is Large ribosomal subunit protein bL36, found in Persephonella marina (strain DSM 14350 / EX-H1).